A 633-amino-acid chain; its full sequence is ATP-dependent clpX-like chaperone, mitochondrial (633 aa).

The transit peptide at 1 to 56 directs the protein to the mitochondrion; it reads MPSCGACTCGAAAVRLITSSLASAQRGISGGRIHMSVLGRLGTFETQILQRAPLRS. The disordered stretch occupies residues 68–100; that stretch reads DGISKDGSGDGNKKSASEGSSKKSGSGNSGKGG. The span at 69 to 83 shows a compositional bias: basic and acidic residues; sequence GISKDGSGDGNKKSA. The segment covering 84 to 93 has biased composition (low complexity); the sequence is SEGSSKKSGS. Positions 93-146 constitute a ClpX-type ZB domain; the sequence is SGNSGKGGNQLRCPKCGDLCTHVETFVSSTRFVKCEKCHHFFVVLSEADSKKSI. Residues cysteine 105, cysteine 108, cysteine 127, and cysteine 130 each contribute to the Zn(2+) site. Residue 294–301 participates in ATP binding; sequence PTGSGKTL. Position 437 is an N6-acetyllysine (lysine 437). Residues 598–610 show a composition bias toward basic and acidic residues; that stretch reads KEPGYIRAPTKES. Residues 598-633 are disordered; sequence KEPGYIRAPTKESSEEEYDSGVEEEGWPRQADAANS. Acidic residues predominate over residues 611 to 622; sequence SEEEYDSGVEEE. Serine 617 carries the post-translational modification Phosphoserine.

Belongs to the ClpX chaperone family. As to quaternary structure, homohexamer that forms a ring structure; this hexamerization requires ATP binding. Component of the ClpXP complex formed by the assembly of two CLPP heptameric rings with two CLPX hexameric rings, giving rise to a symmetrical structure with two central CLPP rings flanked by a CLPX ring at either end of the complex. Interacts with TFAM. In terms of tissue distribution, higher expression in skeletal muscle and heart and to a lesser extent in liver, brain, placenta, lung, kidney and pancreas.

Its subcellular location is the mitochondrion. It is found in the mitochondrion matrix. It localises to the mitochondrion nucleoid. It carries out the reaction ATP + H2O = ADP + phosphate + H(+). In terms of biological role, ATP-dependent chaperone that functions as an unfoldase. As part of the ClpXP protease complex, it recognizes specific protein substrates, unfolds them using energy derived from ATP hydrolysis, and then translocates them to the proteolytic subunit (CLPP) of the ClpXP complex for degradation. Thanks to its chaperone activity, it also functions in the incorporation of the pyridoxal phosphate cofactor into 5-aminolevulinate synthase, thereby activating 5-aminolevulinate (ALA) synthesis, the first step in heme biosynthesis. This chaperone is also involved in the control of mtDNA nucleoid distribution, by regulating mitochondrial transcription factor A (TFAM) activity. The polypeptide is ATP-dependent clpX-like chaperone, mitochondrial (Homo sapiens (Human)).